Consider the following 664-residue polypeptide: MAIVKKKKVSAASKAATEKPEVKKAVKRPVAETEAVTPKKKKLVKKVKKSAKKAHEEEPIEQVEKLQLIDDDEDGLEGLSFPGSDDEDLRDDYSDDDSDAGDHLPIEKKSAALDKQKEKIIAEGEEELQLNIANQATFELPTVEEIENEMKSVPNLEIVKQRIADVIQVLGDFKNRRDPQKSRENYVEVLKKDLCSQYGYNDYLMGKFMDLFPNGAELLEFLEANDNPRPVTIRANSLKVKRRDLAKNLINRGMNVDPAADWTKVGLVVYDSQVPVGATPEYLAGHYMIQGLNSLLPVMALAPQPGDRVLDMCSAPGGKTSHIAALMKNSGVLFANDANFTRCRAIIGNLHRLGVNNTVVCNLGGEEFSKIRPNGFDRILLDAPCSGTGVIWKDQSVKTSKDSQDVQRRHTMQRQLILSALDSLDANSPNGGYLVYSTCSVLVEENEAVVNFLLERRHCELVPTGLSIGVDGYTRFRDYRFHPSLSMTKRYYPHVHNIDGFYVAKIKKLSNAKMSKQGVMEKEKEKAAQKSQNKKNKAEAEASESSDDEEEKKNGVEVNGQKKPAKKQQQKKQKADGDDSDDDNNAPMKNIGSGARANKKRRNQKKAAEKQAAVKEDDGFNTVGNVKRAKKPTQFKSKVPKRAAARTGAKSVKNRRKKMLAKQQ.

Residues 1–105 are disordered; it reads MAIVKKKKVS…DDSDAGDHLP (105 aa). Positions 38 to 52 are enriched in basic residues; the sequence is PKKKKLVKKVKKSAK. Basic and acidic residues predominate over residues 53-68; that stretch reads KAHEEEPIEQVEKLQL. Positions 84-99 are enriched in acidic residues; it reads SDDEDLRDDYSDDDSD. Residues 313 to 319, aspartate 337, and aspartate 382 contribute to the S-adenosyl-L-methionine site; that span reads CSAPGGK. Cysteine 439 serves as the catalytic Nucleophile. Residues 513-664 form a disordered region; the sequence is KMSKQGVMEK…RRKKMLAKQQ (152 aa). The segment covering 519–528 has biased composition (basic and acidic residues); the sequence is VMEKEKEKAA. A compositionally biased stretch (acidic residues) spans 541–550; that stretch reads EASESSDDEE. Basic residues predominate over residues 563–572; sequence KPAKKQQQKK. Basic and acidic residues predominate over residues 606-618; it reads KAAEKQAAVKEDD. Basic residues-rich tracts occupy residues 627-644 and 652-664; these read KRAKKPTQFKSKVPKRAA and VKNRRKKMLAKQQ.

This sequence belongs to the class I-like SAM-binding methyltransferase superfamily. RsmB/NOP family.

It is found in the nucleus. The protein localises to the nucleolus. The enzyme catalyses a cytidine in 26S rRNA + S-adenosyl-L-methionine = a 5-methylcytidine in 26S rRNA + S-adenosyl-L-homocysteine + H(+). Its function is as follows. Methyltransferase which methylates the carbon-5 position of cytosine 2982 to 5-methylcytosine (m5C2982) in 26S rRNA. May play a role in the translation of leucine and proline codons. May be required for the translation of specific mRNAs such as mRNAs involved in gonad development, collagen production and cuticle integrity. Plays a role in ensuring the correct localization of the germline-specific protein gld-1 during development. Not required for pre-rRNA processing, the production of mature 5S, 5.8S, 18S or 26S rRNAs or global translation. Plays a role in positively regulating fertility. This chain is 26S rRNA (cytosine-C(5))-methyltransferase nsun-1, found in Caenorhabditis elegans.